Reading from the N-terminus, the 635-residue chain is Sulfite reductase [ferredoxin], chloroplastic (635 aa).

Residues 1–50 constitute a chloroplast transit peptide; that stretch reads MSGAIGGAEVHGFRGAAAQLPRSRVLGRPIRVAPPAAARPGGASAGSIRA. Disordered stretches follow at residues 31–50 and 245–267; these read RVAP…SIRA and PEVT…PEPI. The span at 245–254 shows a compositional bias: basic and acidic residues; it reads PEVTKARNDN. Residues C494, C500, C540, and C544 each contribute to the [4Fe-4S] cluster site. C544 lines the siroheme pocket.

This sequence belongs to the nitrite and sulfite reductase 4Fe-4S domain family. Monomer. Interacts with ferredoxin. Requires siroheme as cofactor. [4Fe-4S] cluster is required as a cofactor. Phosphorylated; this phosphorylation reduces DNA-binding. Present in roots and leaves (at protein level). In leaves, sulfite reductase activity is detected in both bundle sheath and mesophyll cell types.

It is found in the plastid. Its subcellular location is the chloroplast stroma. It localises to the chloroplast nucleoid. The protein localises to the plastid stroma. The enzyme catalyses hydrogen sulfide + 6 oxidized [2Fe-2S]-[ferredoxin] + 3 H2O = sulfite + 6 reduced [2Fe-2S]-[ferredoxin] + 7 H(+). Inhibited by the tryptophan-modifying reagent, N-bromosuccinimide (NBS), by the lysine-modifying reagent, N-acetylsuccinimide and by the arginine-modifying reagent, phenylglyoxal. Complex formation with ferredoxin prevents these inhibitions. Its function is as follows. Essential protein with sulfite reductase activity required in assimilatory sulfate reduction pathway during both primary and secondary metabolism and thus involved in development and growth. In terms of biological role, DNA-binding protein that binds to both double-stranded and single-stranded DNA without significant sequence specificity to reversibly repress the transcriptional activity of chloroplast nucleoids by promoting DNA compaction and possibly regulate DNA replication. This is Sulfite reductase [ferredoxin], chloroplastic (SIR) from Zea mays (Maize).